Reading from the N-terminus, the 325-residue chain is Diadenosine 5',5'''-P1,P4-tetraphosphate phosphorylase 2 (325 aa).

Residues Lys-53, 92–93 (NK), Asn-148, and 154–157 (GSSQ) contribute to the substrate site. Catalysis depends on His-161, which acts as the Nucleophile. Substrate is bound by residues Gln-163, 277–279 (NST), Met-284, and Lys-288.

Belongs to the ATP adenylyltransferase family. As to quaternary structure, monomer. It depends on a divalent metal cation as a cofactor.

The protein resides in the cytoplasm. Its subcellular location is the nucleus. The enzyme catalyses ADP + ATP + H(+) = P(1),P(4)-bis(5'-adenosyl) tetraphosphate + phosphate. It carries out the reaction sulfate + ADP + H(+) = adenosine 5'-phosphosulfate + phosphate. Functionally, ap4A phosphorylase catalyzes the phosphorolytic degradation of bis(5'-adenosyl) tetraphosphate (Ap4A) into ADP and ATP. Can also use other Np4N' nucleotides (where N and N' stand for A,C,G or U) as substrates, but prefers A-containing substrates. Cannot catalyze the reverse reaction. Additionally, this enzyme can also catalyze the phosphorolytic degradation of adenosine 5'-phosphosulfate (AMPS) into ADP and sulfate, the reversible exchange reaction between inorganic phosphate and the beta-phosphate of a nucleoside diphosphate (NDP), and the synthesis of Ap4A from AMPS plus ATP. The protein is Diadenosine 5',5'''-P1,P4-tetraphosphate phosphorylase 2 of Saccharomyces cerevisiae (strain ATCC 204508 / S288c) (Baker's yeast).